Here is a 401-residue protein sequence, read N- to C-terminus: MKKLWQNCHIATMQNGQYSYIEDAAIVTEGHLIHWIGKQQQLPADTYSETVDLNGAWVTPGFIDCHTHSVFGGNRSVEFEKRLQGVSYAEIAASGGGIASTVRATREASEEQLLNSALKRIRCMQQDGVTTIEIKSGYGLNYENERKMLRVIRQIGEKLPMTVKSTCLAAHALPPEYKDQSDAYIEHICTEMLPKLHAEGLVDAVDAFCEHLAFSPAQVERVFKTAQSLGLPVKLHAEQLSSLGGSSLAARYHALSADHLEYMTEDDVKAMAESGTVAVLLPGAFYLLRETQYPPIESLIKHGVRIALSSDLNPGTSPALSLRLMLNMGSTLFRLTPEQALAGITIHAAQALGLEQTHGSLEQGKVADFVAWDIEHPSEIVYWLGGDLPKRVVQHGQEVIF.

His66 and His68 together coordinate Fe(3+). Zn(2+) is bound by residues His66 and His68. 4-imidazolone-5-propanoate contacts are provided by Arg75, Tyr138, and His171. Tyr138 is a binding site for N-formimidoyl-L-glutamate. Position 236 (His236) interacts with Fe(3+). His236 is a Zn(2+) binding site. Gln239 is a 4-imidazolone-5-propanoate binding site. Residue Asp311 coordinates Fe(3+). Asp311 serves as a coordination point for Zn(2+). N-formimidoyl-L-glutamate-binding residues include Asn313 and Gly315. Thr316 contributes to the 4-imidazolone-5-propanoate binding site.

It belongs to the metallo-dependent hydrolases superfamily. HutI family. Requires Zn(2+) as cofactor. The cofactor is Fe(3+).

It localises to the cytoplasm. The enzyme catalyses 4-imidazolone-5-propanoate + H2O = N-formimidoyl-L-glutamate. It participates in amino-acid degradation; L-histidine degradation into L-glutamate; N-formimidoyl-L-glutamate from L-histidine: step 3/3. In terms of biological role, catalyzes the hydrolytic cleavage of the carbon-nitrogen bond in imidazolone-5-propanoate to yield N-formimidoyl-L-glutamate. It is the third step in the universal histidine degradation pathway. The polypeptide is Imidazolonepropionase (Acinetobacter baumannii (strain AB307-0294)).